We begin with the raw amino-acid sequence, 337 residues long: Mitochondrial uncoupling protein 6 (337 aa).

Solcar repeat units lie at residues 4–136, 145–236, and 246–331; these read KPFL…LKRR, FPLV…VKEI, and GGIG…VRGL. 6 helical membrane-spanning segments follow: residues 6–26, 105–125, 151–171, 210–230, 252–272, and 304–324; these read FLEGGIAAIIAGALTHPLDLI, PAALFSGVSATILRQMLYSAT, ITAGLIAGAVGSVVGNPADVA, RGSWLTVNRAMIVTASQLATY, VAASFAAGIVAAVASNPIDVV, and YKGLVPTATRQGPFTMILFLT.

Belongs to the mitochondrial carrier (TC 2.A.29) family.

The protein localises to the mitochondrion inner membrane. Functionally, PUMPS are mitochondrial transporter proteins that create proton leaks across the inner mitochondrial membrane, thus uncoupling oxidative phosphorylation. This leads to a decrease in the efficiency of oxidative phosphorylation and an increase in heat production. May be involved in protecting plant cells against oxidative stress damage. Recombinant PUMP6, reconstituted into liposomes, transports a wide range of dicarboxylic acids including malate, oxaloacetate and succinate as well as phosphate, sulfate and thiosulfate. However, it is unknown if these transports are of any biological significance in vivo. This is Mitochondrial uncoupling protein 6 (PUMP6) from Arabidopsis thaliana (Mouse-ear cress).